The sequence spans 434 residues: Asparagine--tRNA ligase (434 aa).

It belongs to the class-II aminoacyl-tRNA synthetase family.

It is found in the cytoplasm. It catalyses the reaction tRNA(Asn) + L-asparagine + ATP = L-asparaginyl-tRNA(Asn) + AMP + diphosphate + H(+). In Pyrococcus horikoshii (strain ATCC 700860 / DSM 12428 / JCM 9974 / NBRC 100139 / OT-3), this protein is Asparagine--tRNA ligase.